We begin with the raw amino-acid sequence, 1447 residues long: Bud site selection protein 4 (1447 aa).

The span at 1–16 (MHDAESTVDSLLKEID) shows a compositional bias: basic and acidic residues. 2 disordered regions span residues 1 to 37 (MHDA…TPHN) and 57 to 76 (NTRS…KMST). Phosphoserine is present on serine 10. Composition is skewed to polar residues over residues 22-32 (TKSNITQNGSE) and 59-76 (RSNA…KMST). 5 positions are modified to phosphoserine: serine 78, serine 81, serine 91, serine 96, and serine 167. The disordered stretch occupies residues 272-316 (NLPSKLLNTSNNSHSDSRSPTASVEDLNISTNLPGADSSQNNPVT). The segment covering 277–316 (LLNTSNNSHSDSRSPTASVEDLNISTNLPGADSSQNNPVT) has biased composition (polar residues). Phosphothreonine is present on threonine 365. A Phosphoserine modification is found at serine 367. The disordered stretch occupies residues 444-588 (HQESEHANEQ…VEENEESEHV (145 aa)). Over residues 475–494 (EFQRNSKDGEEYRIVQHEES) the composition is skewed to basic and acidic residues. Residues 497–509 (GQRTKSSEENIIN) show a composition bias toward polar residues. Serine 511 carries the phosphoserine modification. Residues 538–548 (SSSCEDQSVSE) show a composition bias toward polar residues. Residues 549–580 (ARNKDSIEEKEVETKDENIETEKDESEYHKVE) show a composition bias toward basic and acidic residues. Phosphoserine is present on serine 616. A compositionally biased stretch (polar residues) spans 649–664 (NSQFSQQSSITTASTV). Residues 649–672 (NSQFSQQSSITTASTVDSKKDNGS) form a disordered region. Positions 768–879 (EHENIPLSTH…SLWESSYELK (112 aa)) are interaction with IQG1. 2 positions are modified to phosphoserine: serine 805 and serine 811. One can recognise a PH domain in the interval 1302–1413 (NIYKEGYLLQ…WYNKLQEVVE (112 aa)).

It belongs to the BUD4 family. As to quaternary structure, interacts with AXL1, IQG1 and SEC3. In terms of processing, phosphorylated by CDC28.

It is found in the bud neck. In terms of biological role, required for establishment of the axial budding pattern in haploid cells. Cooperates with other bud site selection proteins to recognize a spatial landmark during mitosis and they subsequently become a landmark for downstream polarity establishment factors that coordinate axial budding and cytokinesis. Involved in the septin organization at the bud neck. The polypeptide is Bud site selection protein 4 (BUD4) (Saccharomyces cerevisiae (strain YJM789) (Baker's yeast)).